The following is a 340-amino-acid chain: DNA-directed RNA polymerase subunit alpha (340 aa).

An alpha N-terminal domain (alpha-NTD) region spans residues 1 to 236 (MSVIQKNWQE…DQLQLFINFE (236 aa)). The interval 252–340 (FNKNLLRKVD…DLAKKLEEPY (89 aa)) is alpha C-terminal domain (alpha-CTD).

The protein belongs to the RNA polymerase alpha chain family. As to quaternary structure, homodimer. The RNAP catalytic core consists of 2 alpha, 1 beta, 1 beta' and 1 omega subunit. When a sigma factor is associated with the core the holoenzyme is formed, which can initiate transcription.

The catalysed reaction is RNA(n) + a ribonucleoside 5'-triphosphate = RNA(n+1) + diphosphate. Its function is as follows. DNA-dependent RNA polymerase catalyzes the transcription of DNA into RNA using the four ribonucleoside triphosphates as substrates. The polypeptide is DNA-directed RNA polymerase subunit alpha (Rhodospirillum rubrum (strain ATCC 11170 / ATH 1.1.1 / DSM 467 / LMG 4362 / NCIMB 8255 / S1)).